We begin with the raw amino-acid sequence, 372 residues long: N-methyl-L-tryptophan oxidase (372 aa).

FAD is bound at residue 4–34 (DLIIIGSGSVGAAAGYYATRAGLNVLMTDAH). Residue C308 is modified to S-8alpha-FAD cysteine.

This sequence belongs to the MSOX/MTOX family. MTOX subfamily. In terms of assembly, monomer. It depends on FAD as a cofactor.

It carries out the reaction N(alpha)-methyl-L-tryptophan + O2 + H2O = L-tryptophan + formaldehyde + H2O2. In terms of biological role, catalyzes the oxidative demethylation of N-methyl-L-tryptophan. The protein is N-methyl-L-tryptophan oxidase of Escherichia coli O17:K52:H18 (strain UMN026 / ExPEC).